The following is a 456-amino-acid chain: Adenylosuccinate lyase (456 aa).

Residues 15 to 16 (RY), 90 to 92 (NHD), and 122 to 123 (TS) contribute to the N(6)-(1,2-dicarboxyethyl)-AMP site. His171 (proton donor/acceptor) is an active-site residue. Residue Gln247 participates in N(6)-(1,2-dicarboxyethyl)-AMP binding. Ser295 (proton donor/acceptor) is an active-site residue. N(6)-(1,2-dicarboxyethyl)-AMP contacts are provided by residues Ser296, 301-303 (KVN), Asn309, Arg335, and 340-344 (STVLR).

The protein belongs to the lyase 1 family. Adenylosuccinate lyase subfamily. In terms of assembly, homotetramer. Residues from neighboring subunits contribute catalytic and substrate-binding residues to each active site.

It carries out the reaction N(6)-(1,2-dicarboxyethyl)-AMP = fumarate + AMP. The enzyme catalyses (2S)-2-[5-amino-1-(5-phospho-beta-D-ribosyl)imidazole-4-carboxamido]succinate = 5-amino-1-(5-phospho-beta-D-ribosyl)imidazole-4-carboxamide + fumarate. Its pathway is purine metabolism; AMP biosynthesis via de novo pathway; AMP from IMP: step 2/2. It participates in purine metabolism; IMP biosynthesis via de novo pathway; 5-amino-1-(5-phospho-D-ribosyl)imidazole-4-carboxamide from 5-amino-1-(5-phospho-D-ribosyl)imidazole-4-carboxylate: step 2/2. Its function is as follows. Catalyzes two reactions in de novo purine nucleotide biosynthesis. Catalyzes the breakdown of 5-aminoimidazole- (N-succinylocarboxamide) ribotide (SAICAR or 2-[5-amino-1-(5-phospho-beta-D-ribosyl)imidazole-4-carboxamido]succinate) to 5-aminoimidazole-4-carboxamide ribotide (AICAR or 5-amino-1-(5-phospho-beta-D-ribosyl)imidazole-4-carboxamide) and fumarate, and of adenylosuccinate (ADS or N(6)-(1,2-dicarboxyethyl)-AMP) to adenosine monophosphate (AMP) and fumarate. This chain is Adenylosuccinate lyase (purB), found in Haemophilus influenzae (strain ATCC 51907 / DSM 11121 / KW20 / Rd).